A 346-amino-acid polypeptide reads, in one-letter code: Zinc transporter YKE4 (346 aa).

The Extracellular segment spans residues 1 to 2 (MK). Residues 3-23 (ASHICSYLLSIAPLVVSHGVH) traverse the membrane as a helical segment. Topologically, residues 24–69 (HNRDHGHEANHESKQSFLILKQESIFYSLVCFLQNHLFVLGPRYNA) are cytoplasmic. Residues 70 to 90 (IVAILIIQLMPCLFVLFVPGL) form a helical membrane-spanning segment. Topologically, residues 91-99 (RKNDRASLT) are extracellular. Residues 100 to 120 (LSLLVSFSLGTLLGDILLHVI) traverse the membrane as a helical segment. Topologically, residues 121–126 (PESLSG) are cytoplasmic. The helical transmembrane segment at 127 to 147 (VTDVTMVGGAIFLGFISFLTL) threads the bilayer. At 148 to 202 (DKTMRILSGTSNDDGSIHSHSHSHTPQQTAEKKAGFNMSAYLNVISGIAHHITDG) the chain is on the extracellular side. An N-linked (GlcNAc...) asparagine glycan is attached at asparagine 184. The chain crosses the membrane as a helical span at residues 203 to 223 (IALATSFYSSTQVGIMTSIAV). The Cytoplasmic portion of the chain corresponds to 224–252 (TFHEIPHELGDFAILLSSGFTFPQAIRAQ). Residues 253 to 273 (AVTAFGAVVGTSIGCWMNEIG) traverse the membrane as a helical segment. Asparagine 274 and asparagine 285 each carry an N-linked (GlcNAc...) asparagine glycan. Topologically, residues 274-290 (NNSHKATSSSANASELM) are extracellular. A helical transmembrane segment spans residues 291-311 (LPFTAGGLIYIATTSVVPQIL). At 312–322 (HSSAPDSKLRE) the chain is on the cytoplasmic side. The chain crosses the membrane as a helical span at residues 323-343 (FKKWALQLVFIFVGFAVMALM). The Extracellular portion of the chain corresponds to 344–346 (DEH).

The protein belongs to the ZIP transporter (TC 2.A.5) family. KE4/Catsup subfamily.

The protein localises to the endoplasmic reticulum membrane. Its function is as follows. Zinc transporter whose role depends on the zinc status of the cells. It helps to balance zinc levels between the cytosol and the secretory pathway. It transports zinc into the secretory pathway in a zinc-adequate environment and in a high zinc medium. In high zinc medium, transport of zinc into the secretory pathway is a way to eliminate zinc from the cytosol. Under low cytosolic zinc conditions, it removes zinc from the secretory pathway and acts as a zinc importer that helps to alleviate ER stress. In Saccharomyces cerevisiae (strain ATCC 204508 / S288c) (Baker's yeast), this protein is Zinc transporter YKE4 (YKE4).